A 209-amino-acid polypeptide reads, in one-letter code: Guanylate kinase (209 aa).

Residues 5-184 enclose the Guanylate kinase-like domain; that stretch reads GLLIVFSGPS…AAERVKRVIE (180 aa). Residue 12 to 19 participates in ATP binding; sequence GPSGVGKG.

This sequence belongs to the guanylate kinase family.

It is found in the cytoplasm. The catalysed reaction is GMP + ATP = GDP + ADP. Functionally, essential for recycling GMP and indirectly, cGMP. The sequence is that of Guanylate kinase from Streptococcus thermophilus (strain CNRZ 1066).